The sequence spans 209 residues: Ribosomal RNA large subunit methyltransferase E (209 aa).

The S-adenosyl-L-methionine site is built by glycine 63, tryptophan 65, aspartate 83, aspartate 99, and aspartate 124. Lysine 164 acts as the Proton acceptor in catalysis.

This sequence belongs to the class I-like SAM-binding methyltransferase superfamily. RNA methyltransferase RlmE family.

It is found in the cytoplasm. The enzyme catalyses uridine(2552) in 23S rRNA + S-adenosyl-L-methionine = 2'-O-methyluridine(2552) in 23S rRNA + S-adenosyl-L-homocysteine + H(+). Functionally, specifically methylates the uridine in position 2552 of 23S rRNA at the 2'-O position of the ribose in the fully assembled 50S ribosomal subunit. The sequence is that of Ribosomal RNA large subunit methyltransferase E from Shewanella oneidensis (strain ATCC 700550 / JCM 31522 / CIP 106686 / LMG 19005 / NCIMB 14063 / MR-1).